The following is a 514-amino-acid chain: ATP synthase subunit alpha (514 aa).

170 to 177 (GDRQIGKT) contacts ATP.

Belongs to the ATPase alpha/beta chains family. F-type ATPases have 2 components, CF(1) - the catalytic core - and CF(0) - the membrane proton channel. CF(1) has five subunits: alpha(3), beta(3), gamma(1), delta(1), epsilon(1). CF(0) has three main subunits: a(1), b(2) and c(9-12). The alpha and beta chains form an alternating ring which encloses part of the gamma chain. CF(1) is attached to CF(0) by a central stalk formed by the gamma and epsilon chains, while a peripheral stalk is formed by the delta and b chains.

It is found in the cell inner membrane. The catalysed reaction is ATP + H2O + 4 H(+)(in) = ADP + phosphate + 5 H(+)(out). Functionally, produces ATP from ADP in the presence of a proton gradient across the membrane. The alpha chain is a regulatory subunit. In Ectopseudomonas mendocina (strain ymp) (Pseudomonas mendocina), this protein is ATP synthase subunit alpha.